The chain runs to 446 residues: Histone acetyltransferase ESA1 (446 aa).

One can recognise a Tudor-knot domain in the interval 24-75 (IKCQCWVRKDEEERLAEILSINARVSPSKFYVHYVNFNKRLDEWVTGDRINL). The disordered stretch occupies residues 86–121 (RQLEEDTNKKQKKKKKFPQKAAVVESDAKSSEMGEG). An MYST-type HAT domain is found at 163-434 (AHVRNLSKII…IDAEKLLWKP (272 aa)). The C2HC MYST-type; degenerate zinc-finger motif lies at 196 to 221 (VYIDDFTLQYFGSRKQYERYRKKCTL). An ESA1-RPD3 motif motif is present at residues 246–267 (RTWCRNLCLLSKLFLDHKTLYY). K263 is modified (N6-acetyllysine; by autocatalysis). Acetyl-CoA-binding positions include 304 to 308 (ACILT) and 313 to 319 (QRMGYGR). Catalysis depends on E339, which acts as the Proton donor/acceptor. S343 is an acetyl-CoA binding site.

This sequence belongs to the MYST (SAS/MOZ) family. As to quaternary structure, component of the NuA4 histone acetyltransferase complex. Post-translationally, autoacetylation at Lys-263 is required for proper function.

The protein resides in the nucleus. Its subcellular location is the chromosome. The enzyme catalyses L-lysyl-[histone] + acetyl-CoA = N(6)-acetyl-L-lysyl-[histone] + CoA + H(+). It catalyses the reaction L-lysyl-[protein] + acetyl-CoA = N(6)-acetyl-L-lysyl-[protein] + CoA + H(+). It carries out the reaction 2-hydroxyisobutanoyl-CoA + L-lysyl-[protein] = N(6)-(2-hydroxyisobutanoyl)-L-lysyl-[protein] + CoA + H(+). The catalysed reaction is (2E)-butenoyl-CoA + L-lysyl-[protein] = N(6)-(2E)-butenoyl-L-lysyl-[protein] + CoA + H(+). Its function is as follows. Catalytic component of the NuA4 histone acetyltransferase (HAT) complex which is involved in epigenetic transcriptional activation of selected genes principally by acetylation of nucleosomal histones H4, H3, H2B, H2A and H2A variant H2A.Z. Acetylates histone H4 to form H4K5ac, H4K8ac, H4K12ac and H4K16ac, histone H3 to form H3K14ac, and histone H2A to form H2AK4ac and H2AK7ac. The NuA4 complex is involved in the DNA damage response and is required for chromosome segregation. The NuA4 complex plays a direct role in repair of DNA double-strand breaks (DSBs) through homologous recombination. Recruitment to promoters depends on H3K4me. Also acetylates non-histone proteins. In addition to protein acetyltransferase, can use different acyl-CoA substrates, such as 2-hydroxyisobutanoyl-CoA (2-hydroxyisobutyryl-CoA) or (2E)-butenoyl-CoA (crotonyl-CoA), and is able to mediate protein 2-hydroxyisobutyrylation and crotonylation, respectively. This Candida glabrata (strain ATCC 2001 / BCRC 20586 / JCM 3761 / NBRC 0622 / NRRL Y-65 / CBS 138) (Yeast) protein is Histone acetyltransferase ESA1 (ESA1).